A 37-amino-acid chain; its full sequence is Esculentin-2L (37 aa).

Residues Cys-31 and Cys-37 are joined by a disulfide bond.

Expressed by the skin glands.

The protein localises to the secreted. Functionally, antibacterial activity against Gram-positive bacterium S.aureus and Gram-negative bacterium E.coli. Has activity against C.albicans. The chain is Esculentin-2L from Rana luteiventris (Columbia spotted frog).